A 67-amino-acid chain; its full sequence is MPQLDTSTWFTTVLSTTITLFILMQLKISLHNFPQTPSVKSIKYMKTDNPWESKWTKIYSPLSLPLQ.

A helical transmembrane segment spans residues 8-24; the sequence is TWFTTVLSTTITLFILM. At K54 the chain carries N6-acetyllysine; alternate. Residue K54 is modified to N6-succinyllysine; alternate. At K57 the chain carries N6-acetyllysine.

This sequence belongs to the ATPase protein 8 family. F-type ATPases have 2 components, CF(1) - the catalytic core - and CF(0) - the membrane proton channel. Component of an ATP synthase complex composed of ATP5PB, ATP5MC1, ATP5F1E, ATP5PD, ATP5ME, ATP5PF, ATP5MF, MT-ATP6, MT-ATP8, ATP5F1A, ATP5F1B, ATP5F1D, ATP5F1C, ATP5PO, ATP5MG, ATP5MK and ATP5MJ. Interacts with PRICKLE3.

It localises to the mitochondrion membrane. Mitochondrial membrane ATP synthase (F(1)F(0) ATP synthase or Complex V) produces ATP from ADP in the presence of a proton gradient across the membrane which is generated by electron transport complexes of the respiratory chain. F-type ATPases consist of two structural domains, F(1) - containing the extramembraneous catalytic core and F(0) - containing the membrane proton channel, linked together by a central stalk and a peripheral stalk. During catalysis, ATP synthesis in the catalytic domain of F(1) is coupled via a rotary mechanism of the central stalk subunits to proton translocation. Part of the complex F(0) domain. Minor subunit located with subunit a in the membrane. The polypeptide is ATP synthase protein 8 (MT-ATP8) (Microtus pennsylvanicus (Meadow vole)).